A 311-amino-acid polypeptide reads, in one-letter code: Porphobilinogen deaminase (311 aa).

C241 carries the S-(dipyrrolylmethanemethyl)cysteine modification.

Belongs to the HMBS family. In terms of assembly, monomer. Dipyrromethane is required as a cofactor.

It catalyses the reaction 4 porphobilinogen + H2O = hydroxymethylbilane + 4 NH4(+). The protein operates within porphyrin-containing compound metabolism; protoporphyrin-IX biosynthesis; coproporphyrinogen-III from 5-aminolevulinate: step 2/4. In terms of biological role, tetrapolymerization of the monopyrrole PBG into the hydroxymethylbilane pre-uroporphyrinogen in several discrete steps. The protein is Porphobilinogen deaminase of Shouchella clausii (strain KSM-K16) (Alkalihalobacillus clausii).